Consider the following 452-residue polypeptide: Probable ECA polymerase (452 aa).

Helical transmembrane passes span 6 to 26, 37 to 57, 63 to 83, 118 to 138, 155 to 175, 181 to 201, 207 to 227, 228 to 248, 341 to 361, 378 to 398, and 410 to 430; these read FSGL…LTWF, VFFS…TSVL, VGVA…CFYG, VILM…NGFL, GVAL…VYFL, AWLF…MIVG, IIIA…ISLW, MLAA…LKRY, LVVM…GLII, YKAA…IVLA, and VFFL…FWLF.

It belongs to the WzyE family. In terms of assembly, probably part of a complex composed of WzxE, WzyE and WzzE.

It localises to the cell inner membrane. It functions in the pathway bacterial outer membrane biogenesis; enterobacterial common antigen biosynthesis. In terms of biological role, probably involved in the polymerization of enterobacterial common antigen (ECA) trisaccharide repeat units. This is Probable ECA polymerase from Salmonella typhi.